The primary structure comprises 26 residues: Thioredoxin H-type (26 aa).

This sequence belongs to the thioredoxin family. Plant H-type subfamily.

The protein resides in the cytoplasm. Participates in various redox reactions through the reversible oxidation of the active center dithiol to a disulfide. The H form is known to activate a number of cytosolic enzymes. The protein is Thioredoxin H-type of Populus euphratica (Euphrates poplar).